We begin with the raw amino-acid sequence, 459 residues long: Cysteine--tRNA ligase (459 aa).

Position 28 (Cys28) interacts with Zn(2+). Residues 30 to 40 (MTVYDFCHLGH) carry the 'HIGH' region motif. Cys209, His234, and Glu238 together coordinate Zn(2+). A 'KMSKS' region motif is present at residues 266–270 (KMAKS). An ATP-binding site is contributed by Lys269. The disordered stretch occupies residues 440-459 (QARGIELEDTPEGTKWRRTR).

It belongs to the class-I aminoacyl-tRNA synthetase family. Monomer. Requires Zn(2+) as cofactor.

The protein resides in the cytoplasm. It carries out the reaction tRNA(Cys) + L-cysteine + ATP = L-cysteinyl-tRNA(Cys) + AMP + diphosphate. This is Cysteine--tRNA ligase from Halorhodospira halophila (strain DSM 244 / SL1) (Ectothiorhodospira halophila (strain DSM 244 / SL1)).